The sequence spans 333 residues: Sphingomyelinase C (333 aa).

A signal peptide spans 1–27 (MKGKLLKGVLSFGIGLGVLYGGSSVQA). A disulfide bridge links C150 with C186.

This sequence belongs to the neutral sphingomyelinase family. Mg(2+) serves as cofactor.

The protein resides in the secreted. The catalysed reaction is a sphingomyelin + H2O = phosphocholine + an N-acylsphing-4-enine + H(+). With respect to regulation, activated by cobalt and manganese ions. Required, with sphingomyelinase, to effect target cell lysis (hemolysis). This Bacillus cereus protein is Sphingomyelinase C (sph).